A 337-amino-acid chain; its full sequence is Regulator of RpoS (337 aa).

Residues 9-123 form the Response regulatory domain; it reads QILIVEDEQV…NRLREMVFAC (115 aa). At D58 the chain carries 4-aspartylphosphate.

The protein belongs to the RssB family. In terms of assembly, binds to RpoS. Phosphorylated. Phosphorylation stimulates the interaction with RpoS and, therefore, the proteolysis of RpoS.

In terms of biological role, regulates the turnover of the sigma S factor (RpoS) by promoting its proteolysis in exponentially growing cells. Acts by binding and delivering RpoS to the ClpXP protease. RssB is not co-degraded with RpoS, but is released from the complex and can initiate a new cycle of RpoS recognition and degradation. The polypeptide is Regulator of RpoS (Shigella flexneri).